Here is a 147-residue protein sequence, read N- to C-terminus: Large ribosomal subunit protein uL13 (147 aa).

Belongs to the universal ribosomal protein uL13 family. In terms of assembly, part of the 50S ribosomal subunit.

Functionally, this protein is one of the early assembly proteins of the 50S ribosomal subunit, although it is not seen to bind rRNA by itself. It is important during the early stages of 50S assembly. In Streptomyces griseus subsp. griseus (strain JCM 4626 / CBS 651.72 / NBRC 13350 / KCC S-0626 / ISP 5235), this protein is Large ribosomal subunit protein uL13.